The primary structure comprises 148 residues: Arginine repressor (148 aa).

Belongs to the ArgR family.

It localises to the cytoplasm. It functions in the pathway amino-acid biosynthesis; L-arginine biosynthesis [regulation]. Regulates arginine biosynthesis genes. In Streptococcus pneumoniae serotype 4 (strain ATCC BAA-334 / TIGR4), this protein is Arginine repressor (argR).